Reading from the N-terminus, the 437-residue chain is Vasoactive intestinal polypeptide receptor 2 (437 aa).

An N-terminal signal peptide occupies residues 1 to 22 (MRASVVLTCYCWLLVRVSSIHP). The Extracellular segment spans residues 23-123 (ECRFHLEIQE…EDESKISFYI (101 aa)). Disulfide bonds link cysteine 37-cysteine 60, cysteine 51-cysteine 92, and cysteine 74-cysteine 108. Asparagine 57, asparagine 87, and asparagine 91 each carry an N-linked (GlcNAc...) asparagine glycan. Residues 124-149 (LVKAIYTLGYSVSLMSLTTGSIIICL) traverse the membrane as a helical segment. The Cytoplasmic segment spans residues 150 to 157 (FRKLHCTR). Residues 158–179 (NYIHLNLFLSFMLRAISVLVKD) traverse the membrane as a helical segment. The Extracellular portion of the chain corresponds to 180 to 202 (SVLYSSSGLLRCHDQPASWVGCK). Cysteine 201 and cysteine 270 are oxidised to a cystine. A helical membrane pass occupies residues 203-227 (LSLVFFQYCIMANFYWLLVEGLYLH). The Cytoplasmic segment spans residues 228-238 (TLLVAILPPSR). The helical transmembrane segment at 239 to 260 (CFLAYLLIGWGIPSVCIGAWTA) threads the bilayer. At 261 to 279 (TRLSLEDTGCWDTNDHSIP) the chain is on the extracellular side. A helical transmembrane segment spans residues 280-303 (WWVIRMPILISIVVNFALFISIVR). Over 304-324 (ILLQKLTSPDVGGNDQSQYKR) the chain is Cytoplasmic. A helical transmembrane segment spans residues 325–345 (LAKSTLLLIPLFGVHYMVFAA). Topologically, residues 346–353 (FPIGISST) are extracellular. Residues 354 to 377 (YQILFELCVGSFQGLVVAVLYCFL) traverse the membrane as a helical segment. The Cytoplasmic segment spans residues 378 to 437 (NSEVQCELKRRWRGLCLTQAGSRDYRLHSWSMSRNGSESALQIHRGSRTQSFLQSETSVI).

Belongs to the G-protein coupled receptor 2 family. In terms of assembly, interacts with ADCYAP1/PACAP (via N-terminal extracellular domain); activated by PACAP27 and CAPAC38 neuropeptides. Interacts with VIP; the interaction results in VIPR1 activation. Expressed at high levels in the MIN6 cells, at moderate levels in pancreatic islets, insulin-secreting cells, lung, brain, stomach, and colon, and at low levels in the heart.

It is found in the cell membrane. Functionally, g protein-coupled receptor activated by the neuropeptides vasoactive intestinal peptide (VIP) and pituitary adenylate cyclase-activating polypeptide (ADCYAP1/PACAP). Binds VIP and both PACAP27 and PACAP38 bioactive peptides with the order of ligand affinity of VIP = PACAP38 &gt; PACAP27. Ligand binding causes a conformation change that triggers signaling via guanine nucleotide-binding proteins (G proteins) and modulates the activity of downstream effectors. Activates cAMP-dependent pathway. May be coupled to phospholipase C. In Mus musculus (Mouse), this protein is Vasoactive intestinal polypeptide receptor 2.